A 465-amino-acid polypeptide reads, in one-letter code: Iron-sulfur cluster assembly SufBD family protein SH2035 (465 aa).

Belongs to the iron-sulfur cluster assembly SufBD family.

This Staphylococcus haemolyticus (strain JCSC1435) protein is Iron-sulfur cluster assembly SufBD family protein SH2035.